Here is a 452-residue protein sequence, read N- to C-terminus: MKTITEFQNKKVLILGLAKSGEAAARLLARLGAIVTVNDSKPFEENPAAQALLEEGIRVICGSHPLELLDEDFYCMVKNPGIRYDNPMVVCALDKAISILTEVELAYLVSEAPIIGITGSNGKTTTTTMIADVLNAGNQSALLAGNIGFPASEVAQAATAKDILVMELSSFQLLGTEQFQPHIAVITNLVPTHLDYHGSFEDYIAAKWRIQHRMTDKDYLVLNADQELVKSLAQKTKASPVFFSTKEKVDGAYLADGYLYFKEEQVMSAAELGLPGRHNIENALATIAVAKLRGISNQVISKTLSHFSGVKHRLQLVGTLNQVTFYNDSKSTNILACQKALSGFDNSRVILIAGGLDRGNEFDELVPDLVGLKKMILLGESAERMKRAADKAGVSYLDAKDVAAATKIAFEQAKPGDIILLSPANASWDMYPSFESRGDEFLAAYDALKGEA.

Residue 119 to 125 (GSNGKTT) participates in ATP binding.

Belongs to the MurCDEF family.

The protein resides in the cytoplasm. It catalyses the reaction UDP-N-acetyl-alpha-D-muramoyl-L-alanine + D-glutamate + ATP = UDP-N-acetyl-alpha-D-muramoyl-L-alanyl-D-glutamate + ADP + phosphate + H(+). It functions in the pathway cell wall biogenesis; peptidoglycan biosynthesis. Functionally, cell wall formation. Catalyzes the addition of glutamate to the nucleotide precursor UDP-N-acetylmuramoyl-L-alanine (UMA). The polypeptide is UDP-N-acetylmuramoylalanine--D-glutamate ligase (Streptococcus equi subsp. zooepidemicus (strain MGCS10565)).